The sequence spans 354 residues: Uroporphyrinogen decarboxylase (354 aa).

Residues Arg-27–Arg-31, Phe-46, Asp-77, Tyr-154, Thr-209, and His-327 contribute to the substrate site.

It belongs to the uroporphyrinogen decarboxylase family. Homodimer.

It localises to the cytoplasm. It carries out the reaction uroporphyrinogen III + 4 H(+) = coproporphyrinogen III + 4 CO2. Its pathway is porphyrin-containing compound metabolism; protoporphyrin-IX biosynthesis; coproporphyrinogen-III from 5-aminolevulinate: step 4/4. Catalyzes the decarboxylation of four acetate groups of uroporphyrinogen-III to yield coproporphyrinogen-III. The polypeptide is Uroporphyrinogen decarboxylase (Escherichia coli O157:H7).